Here is a 417-residue protein sequence, read N- to C-terminus: Serine--tRNA ligase (417 aa).

232 to 234 (TAE) provides a ligand contact to L-serine. ATP-binding positions include 263 to 265 (RRE) and Val279. Residue Glu286 coordinates L-serine. 350-353 (EISS) serves as a coordination point for ATP. Ser385 contributes to the L-serine binding site.

It belongs to the class-II aminoacyl-tRNA synthetase family. Type-1 seryl-tRNA synthetase subfamily. Homodimer. The tRNA molecule binds across the dimer.

Its subcellular location is the cytoplasm. The catalysed reaction is tRNA(Ser) + L-serine + ATP = L-seryl-tRNA(Ser) + AMP + diphosphate + H(+). It catalyses the reaction tRNA(Sec) + L-serine + ATP = L-seryl-tRNA(Sec) + AMP + diphosphate + H(+). It participates in aminoacyl-tRNA biosynthesis; selenocysteinyl-tRNA(Sec) biosynthesis; L-seryl-tRNA(Sec) from L-serine and tRNA(Sec): step 1/1. Its function is as follows. Catalyzes the attachment of serine to tRNA(Ser). Is also able to aminoacylate tRNA(Sec) with serine, to form the misacylated tRNA L-seryl-tRNA(Sec), which will be further converted into selenocysteinyl-tRNA(Sec). This is Serine--tRNA ligase from Leptospira borgpetersenii serovar Hardjo-bovis (strain JB197).